The chain runs to 22 residues: Brevinin-1OKa (22 aa).

Lysine amide is present on Lys-22.

As to expression, expressed by the skin glands.

The protein resides in the secreted. Antimicrobial peptide. Active against Gram-negative bacterium E.coli (MIC=12.5 uM) and against Gram-positive bacterium S.aureus (MIC=12.5 uM). In Nidirana okinavana (Kampira Falls frog), this protein is Brevinin-1OKa.